A 279-amino-acid polypeptide reads, in one-letter code: Phycobilisome rod-core linker polypeptide CpcG1 (279 aa).

The region spanning 11–189 (TTQNQRVEGY…YWRNRLLEQF (179 aa)) is the PBS-linker domain.

Belongs to the phycobilisome linker protein family. In terms of assembly, the phycobilisome is a hemidiscoidal structure that is composed of two distinct substructures: a core complex and a number of rods radiating from the core.

Its subcellular location is the cellular thylakoid membrane. Functionally, rod-core linker protein required for attachment of phycocyanin to allophycocyanin in cores of phycobilisomes. Linker polypeptides determine the state of aggregation and the location of the disk-shaped phycobiliprotein units within the phycobilisome and modulate their spectroscopic properties in order to mediate a directed and optimal energy transfer. The protein is Phycobilisome rod-core linker polypeptide CpcG1 (cpcG1) of Mastigocladus laminosus (Fischerella sp.).